A 1430-amino-acid chain; its full sequence is Nephrocystin-4 (1430 aa).

Residues 824-1430 are sufficient for basal bodies localization; it reads MRMGNVGRPP…ETFCVKVRYE (607 aa). Residues 828 to 857 form a disordered region; it reads NVGRPPEKKLKRRETLPPSNSRIITMHDGR.

It belongs to the NPHP4 family.

The protein localises to the cytoplasm. Its subcellular location is the cytoskeleton. It localises to the cilium basal body. Its function is as follows. Involved in the organization of apical junctions. Required for building functional cilia. Involved in the organization of the subapical actin network in multiciliated epithelial cells. Seems to recruit int to basal bodies of motile cilia which subsequently interacts with actin-modifying proteins such as daam1. May down-regulate the canonical Wnt pathway and promote the Wnt-PCP pathway. Acts as a negative regulator of the hippo pathway. This Xenopus laevis (African clawed frog) protein is Nephrocystin-4 (nphp4).